The primary structure comprises 3033 residues: Genome polyprotein (3033 aa).

Ser2 is subject to N-acetylserine; by host. Residues Ser2 to Lys23 form an interaction with STAT1 region. The segment at Ser2 to Pro58 is interaction with EIF2AK2/PKR. The segment at Ser2 to Arg59 is interaction with DDX3X. Residues Ser2 to Ser75 form a disordered region. Residues Ser2–Asn168 lie on the Cytoplasmic side of the membrane. Short sequence motifs (nuclear localization signal) lie at residues Pro5–Arg13 and Pro38–Arg43. A compositionally biased stretch (basic residues) spans Pro7–Asn16. The span at Gly32–Arg47 shows a compositional bias: low complexity. Residue Ser53 is modified to Phosphoserine; by host. Short sequence motifs (nuclear localization signal) lie at residues Pro58–Pro64 and Pro66–Ser71. Ser99 carries the post-translational modification Phosphoserine; by host. Residues Pro112–Ala152 are important for endoplasmic reticulum and mitochondrial localization. At Ser116 the chain carries Phosphoserine; by host PKA. The interval Val122–Ser173 is interaction with APOA2. Positions Phe164–Gly167 are important for lipid droplets localization. A helical transmembrane segment spans residues Leu169 to Val189. Residues Leu178–Ala191 constitute a propeptide, ER anchor for the core protein, removed in mature form by host signal peptidase. The Lumenal segment spans residues Ser190–Gly358. Residues Asn196, Asn209, and Asn234 are each glycosylated (N-linked (GlcNAc...) asparagine; by host). The important for fusion stretch occupies residues Val265–Gln296. The N-linked (GlcNAc...) asparagine; by host glycan is linked to Asn305. A helical transmembrane segment spans residues Leu359–Ala379. The Lumenal segment spans residues Gly380–Leu729. The segment at Thr385–Ile411 is HVR1. Asn417, Asn423, Asn430, and Asn448 each carry an N-linked (GlcNAc...) (high mannose) asparagine; by host glycan. 4 disulfides stabilise this stretch: Cys429–Cys554, Cys452–Cys459, Cys488–Cys496, and Cys505–Cys510. Asn477 is a glycosylation site (N-linked (GlcNAc...) (high mannose) asparagine; by host). The tract at residues Met484 to Cys496 is CD81-binding 1. The interval Leu524–Thr555 is CD81-binding 2. Asn534, Asn542, and Asn558 each carry an N-linked (GlcNAc...) (high mannose) asparagine; by host glycan. The cysteines at positions 566 and 571 are disulfide-linked. N-linked (GlcNAc...) (high mannose) asparagine; by host glycosylation occurs at Asn578. Disulfide bonds link Cys585/Cys589, Cys601/Cys624, and Cys611/Cys648. N-linked (GlcNAc...) (high mannose) asparagine; by host glycosylation is found at Asn627 and Asn649. Cysteines 656 and 681 form a disulfide. The tract at residues Ser664–Glu675 is EIF2AK2/eIF2-alpha phosphorylation homology domain (PePHD). A helical transmembrane segment spans residues Leu730–Ala750. Residues Ala751–Ala761 are Lumenal-facing. The chain crosses the membrane as a helical span at residues Ser762–Ile782. The Cytoplasmic portion of the chain corresponds to Lys783–Val786. A helical transmembrane segment spans residues Val787–Leu807. The Lumenal portion of the chain corresponds to Pro808–Ser817. A helical transmembrane segment spans residues Val818 to Gly838. At Tyr839–Cys885 the chain is on the cytoplasmic side. Residues Pro886–Leu906 traverse the membrane as a helical segment. The Lumenal segment spans residues Lys907–Leu932. The region spanning Lys907–Leu1030 is the Peptidase C18 domain. The segment at Gly908–Arg1210 is protease NS2-3. Cys926 carries the S-palmitoyl cysteine; by host lipid modification. A helical membrane pass occupies residues Ala933–Ile953. Positions Ala933 to Ile953 are interaction with host SCPS1. The Cytoplasmic segment spans residues Tyr954 to Thr1661. Active-site for protease NS2 activity; shared with dimeric partner residues include His956, Glu976, and Cys997. Residues Ala1031 to Pro1212 form the Peptidase S29 domain. Catalysis depends on charge relay system; for serine protease NS3 activity residues His1087 and Asp1111. Cys1127 and Cys1129 together coordinate Zn(2+). Ser1169 serves as the catalytic Charge relay system; for serine protease NS3 activity. Residues Cys1175 and His1179 each coordinate Zn(2+). The 153-residue stretch at Pro1221–Gln1373 folds into the Helicase ATP-binding domain. ATP is bound at residue Ala1234 to Ser1241. Residues Ser1241 and Glu1321 each coordinate Mg(2+). Residues Asp1320–His1323 carry the DECH box motif. Residues Gln1490–Gly1501 form an RNA-binding region. A helical membrane pass occupies residues Ser1662–Gly1682. The interval Cys1683 to Gln1694 is NS3-binding. The Cytoplasmic segment spans residues Cys1683–Thr1809. A helical transmembrane segment spans residues Thr1810 to Ala1830. At Thr1831–Gly1832 the chain is on the lumenal side. A helical transmembrane segment spans residues Phe1833–Val1853. Residues Gly1837–Gly1865 are glycine zipper. A topological domain (cytoplasmic) is located at residue Asp1854. The helical transmembrane segment at Ile1855 to Gly1875 threads the bilayer. The Lumenal portion of the chain corresponds to Glu1876–Asn1885. The helical transmembrane segment at Leu1886–Leu1906 threads the bilayer. The Cytoplasmic portion of the chain corresponds to Arg1907 to Cys1976. The S-palmitoyl cysteine; by host moiety is linked to residue Cys1972. Residue Cys1976 is the site of S-palmitoyl cysteine; by host; partial attachment. Residues Ser1977 to Met2007 lie within the membrane without spanning it. The tract at residues Arg1982–Lys2002 is membrane-binding. Residues Pro2008 to Arg3012 lie on the Cytoplasmic side of the membrane. The RNA-binding stretch occupies residues Gly2009–Ala2225. The Zn(2+) site is built by Cys2015, Cys2033, Cys2035, and Cys2056. Tyr2069 is modified (phosphotyrosine; by host). Positions Glu2124–Ala2212 are FKBP8-binding. Residues Glu2124–Thr2332 form a transcriptional activation region. Residues Pro2139–Pro2143 form an interaction with non-structural protein 4A region. Disordered stretches follow at residues Arg2193–Ser2214 and Ala2309–Leu2335. A Phosphoserine; by host; in p56 modification is found at Ser2198. Over residues Ser2198–Ser2214 the composition is skewed to low complexity. At Ser2201 the chain carries Phosphoserine; by host; in p58. At Ser2205 the chain carries Phosphoserine; by host; in p56 and p58, regulates intracellular NS5A distribution. Phosphoserine; by host; in p58 is present on residues Ser2208, Ser2211, and Ser2214. Residues Leu2210 to Lys2249 are ISDR. Positions Ser2214–Met2275 are interaction with EIF2AK2/PKR. The segment at Leu2253–Thr2310 is NS4B-binding. The segment covering Leu2316–Pro2326 has biased composition (pro residues). The SH3-binding motif lies at Thr2322–Pro2325. Thr2324 is subject to Phosphothreonine; by host. Positions Pro2326 to Gly2334 match the Nuclear localization signal motif. The tract at residues Ser2336 to Ser2447 is interaction with host IFI27. Residue Lys2350 forms a Glycyl lysine isopeptide (Lys-Gly) (interchain with G-Cter in ubiquitin) linkage. The segment at Ser2351 to Thr2431 is disordered. Residues Ser2358–Leu2381 are V3. The segment covering Glu2398–Gln2408 has biased composition (acidic residues). Positions Gly2417–Thr2431 are enriched in low complexity. The 119-residue stretch at Pro2656–Asp2774 folds into the RdRp catalytic domain. Mg(2+) contacts are provided by Asp2662, Asp2760, and Asp2761. The chain crosses the membrane as a helical span at residues Leu3013–Arg3033.

The protein belongs to the hepacivirus polyprotein family. In terms of assembly, homooligomer. Interacts with E1 (via C-terminus). Interacts with the non-structural protein 5A. Interacts (via N-terminus) with host STAT1 (via SH2 domain); this interaction results in decreased STAT1 phosphorylation and ubiquitin-mediated proteasome-dependent STAT1 degradation, leading to decreased IFN-stimulated gene transcription. Interacts with host STAT3; this interaction constitutively activates STAT3. Interacts with host LTBR receptor. Interacts with host TNFRSF1A receptor and possibly induces apoptosis. Interacts with host HNRPK. Interacts with host YWHAE. Interacts with host UBE3A/E6AP. Interacts with host DDX3X. Interacts with host APOA2. Interacts with host RXRA protein. Interacts with host SP110 isoform 3/Sp110b; this interaction sequesters the transcriptional corepressor SP110 away from the nucleus. Interacts with host CREB3 nuclear transcription protein; this interaction triggers cell transformation. Interacts with host ACY3. Interacts with host C1QR1. Interacts with host RBM24; this interaction, which enhances the interaction of the mature core protein with 5'-UTR, may inhibit viral translation and favor replication. Interacts with host EIF2AK2/PKR; this interaction induces the autophosphorylation of EIF2AK2. Part of the viral assembly initiation complex composed of NS2, E1, E2, NS3, NS4A, NS5A and the mature core protein. As to quaternary structure, forms a heterodimer with envelope glycoprotein E2. Interacts with mature core protein. Interacts with protease NS2. The heterodimer E1/E2 interacts with host CLDN1; this interaction plays a role in viral entry into host cell. Interacts with host SPSB2 (via C-terminus). Part of the viral assembly initiation complex composed of NS2, E1, E2, NS3, NS4A, NS5A and the mature core protein. Interacts with host NEURL3; this interaction prevents E1 binding to glycoprotein E2. Forms a heterodimer with envelope glycoprotein E1. Interacts with host CD81 and SCARB1 receptors; this interaction may play a role in viral entry into host cell. Interacts with host EIF2AK2/PKR; this interaction inhibits EIF2AK2 and probably allows the virus to evade the innate immune response. Interacts with host CD209/DC-SIGN and CLEC4M/DC-SIGNR. Interact with host SPCS1; this interaction is essential for viral particle assembly. Interacts with protease NS2. The heterodimer E1/E2 interacts with host CLDN1; this interaction plays a role in viral entry into host cell. Part of the viral assembly initiation complex composed of NS2, E1, E2, NS3, NS4A, NS5A and the mature core protein. Interacts with host SLC3A2/4F2hc; the interaction may facilitate viral entry into host cell. Interacts with human PLSCR1. In terms of assembly, homohexamer. Homoheptamer. Interacts with protease NS2. As to quaternary structure, homodimer. Interacts with host SPCS1; this interaction is essential for viral particle assembly. Interacts with envelope glycoprotein E1. Interacts with envelope glycoprotein E2. Interacts with viroporin p7. Interacts with serine protease/helicase NS3. Part of the replication complex composed of NS2, NS3, NS4A, NS4B, NS5A and the RNA-directed RNA polymerase embedded in an ER-derived membranous web. Part of the viral assembly initiation complex composed of NS2, E1, E2, NS3, NS4A, NS5A and the mature core protein. Interacts with protease NS2. Interacts with non-structural protein 4A; this interaction stabilizes the folding of NS3 serine protease. NS3-NS4A interaction is essential for NS3 activation and allows membrane anchorage of the latter. NS3/NS4A complex also prevents phosphorylation of host IRF3, thus preventing the establishment of dsRNA induced antiviral state. Interacts with host MAVS; this interaction leads to the cleavage and inhibition of host MAVS. Interacts with host TICAM1; this interaction leads to the cleavage and inhibition of host TICAM1. Interacts with host TANK-binding kinase/TBK1; this interaction results in the inhibition of the association between TBK1 and IRF3, which leads to the inhibition of IRF3 activation. Interacts with host RBM24. Part of the replication complex composed of NS2, NS3, NS4A, NS4B, NS5A and the RNA-directed RNA polymerase embedded in an ER-derived membranous web. Part of the viral assembly initiation complex composed of NS2, E1, E2, NS3, NS4A, NS5A and the mature core protein. In terms of assembly, interacts with NS3 serine protease; this interaction stabilizes the folding of NS3 serine protease. NS3-NS4A interaction is essential for NS3 activation and allows membrane anchorage of the latter. Interacts with non-structural protein 5A (via N-terminus). Part of the replication complex composed of NS2, NS3, NS4A, NS4B, NS5A and the RNA-directed RNA polymerase embedded in an ER-derived membranous web. Part of the viral assembly initiation complex composed of NS2, E1, E2, NS3, NS4A, NS5A and the mature core protein. As to quaternary structure, homomultimer. Interacts with non-structural protein NS5A. Interacts with host PLA2G4C; this interaction likely initiates the recruitment of replication complexes to lipid droplets. Interacts with host STING; this interaction disrupts the interaction between STING and TBK1 thereby suppressing the interferon signaling. Part of the replication complex composed of NS2, NS3, NS4A, NS4B, NS5A and the RNA-directed RNA polymerase embedded in an ER-derived membranous web. Monomer. Homodimer; dimerization is required for RNA-binding. Interacts with the mature core protein. Interacts (via N-terminus) with non-structural protein 4A. Interacts with non-structural protein 4B. Interacts (via region D2) with RNA-directed RNA polymerase. Part of the viral assembly initiation complex composed of NS2, E1, E2, NS3, NS4A, NS5A and the mature core protein. Part of the replication complex composed of NS2, NS3, NS4A, NS4B, NS5A and the RNA-directed RNA polymerase embedded in an ER-derived membranous web. Interacts with host GRB2. Interacts with host BIN1. Interacts with host PIK3R1. Interacts with host SRCAP. Interacts with host FKBP8. Interacts (via C-terminus) with host VAPB (via MSP domain). Interacts with host EIF2AK2/PKR; this interaction leads to disruption of EIF2AK2 dimerization by NS5A and probably allows the virus to evade the innate immune response. Interacts (via N-terminus) with host PACSIN2 (via N-terminus); this interaction attenuates protein kinase C alpha-mediated phosphorylation of PACSIN2 by disrupting the interaction between PACSIN2 and PRKCA. Interacts (via N-terminus) with host SRC kinase (via SH2 domain). Interacts with most Src-family kinases. Interacts with host IFI27 and SKP2; promotes the ubiquitin-mediated proteasomal degradation of NS5A. Interacts with host GPS2. Interacts with host TNFRSF21; this interaction allows the modulation by the virus of JNK, p38 MAPK, STAT3, and Akt signaling pathways in a DR6-dependent manner. Interacts (via N-terminus) with host CIDEB (via N-terminus); this interaction seems to regulate the association of HCV particles with APOE. Interacts with host CHKA/Choline Kinase-alpha; CHKA bridges host PI4KA and NS5A and potentiates NS5A-stimulated PI4KA activity, which then facilitates the targeting of the ternary complex to the ER for viral replication. Interacts with host SPSB2 (via C-terminus); this interaction targets NS5A for ubiquitination and degradation. Interacts with host RAB18; this interaction may promote the association of NS5A and other replicase components with lipid droplets. Interacts (via region D2) with host PPIA/CYPA; the interaction stimulates RNA-binding ability of NS5A and is dependent on the peptidyl-prolyl cis-trans isomerase activity of PPIA/CYPA. Interacts with host TRIM14; this interaction induces the degradation of NS5A. In terms of assembly, homooligomer. Interacts with non-structural protein 5A. Interacts with host VAPB. Interacts with host PRK2/PKN2. Interacts with host HNRNPA1 and SEPT6; these interactions facilitate viral replication. Part of the replication complex composed of NS2, NS3, NS4A, NS4B, NS5A and the RNA-directed RNA polymerase. Requires Zn(2+) as cofactor. The cofactor is Mg(2+). Post-translationally, specific enzymatic cleavages in vivo yield mature proteins. The structural proteins, core, E1, E2 and p7 are produced by proteolytic processing by host signal peptidases. The core protein precursor is synthesized as a 23 kDa, which is retained in the ER membrane through the hydrophobic signal peptide. Cleavage by the signal peptidase releases the 21 kDa mature core protein. The cleavage of the core protein precursor occurs between aminoacids 176 and 188 but the exact cleavage site is not known. Some degraded forms of the core protein appear as well during the course of infection. The other proteins (p7, NS2, NS3, NS4A, NS4B, NS5A and NS5B) are cleaved by the viral proteases. Autoprocessing between NS2 and NS3 is mediated by the NS2 cysteine protease catalytic domain and regulated by the NS3 N-terminal domain. In terms of processing, phosphorylated by host PKC and PKA. Ubiquitinated; mediated by UBE3A and leading to core protein subsequent proteasomal degradation. Post-translationally, highly N-glycosylated. In terms of processing, palmitoylation is required for NS2/3 autoprocessing and E2 recruitment to membranes. Palmitoylated. This modification may play a role in its polymerization or in protein-protein interactions. Post-translationally, phosphorylated on serines in a basal form termed p56. p58 is a hyperphosphorylated form of p56. p56 and p58 coexist in the cell in roughly equivalent amounts. Hyperphosphorylation is dependent on the presence of NS4A. Host CSNK1A1/CKI-alpha or RPS6KB1 kinases may be responsible for NS5A phosphorylation. In terms of processing, tyrosine phosphorylation is essential for the interaction with host SRC. The N-terminus is phosphorylated by host PRK2/PKN2.

The protein resides in the host endoplasmic reticulum membrane. It localises to the host mitochondrion membrane. It is found in the virion. The protein localises to the host cytoplasm. Its subcellular location is the host nucleus. The protein resides in the host lipid droplet. It localises to the virion membrane. It is found in the host mitochondrion. The protein localises to the host cell membrane. Its subcellular location is the host perinuclear region. It catalyses the reaction Hydrolysis of four peptide bonds in the viral precursor polyprotein, commonly with Asp or Glu in the P6 position, Cys or Thr in P1 and Ser or Ala in P1'.. The enzyme catalyses a ribonucleoside 5'-triphosphate + H2O = a ribonucleoside 5'-diphosphate + phosphate + H(+). The catalysed reaction is ATP + H2O = ADP + phosphate + H(+). It carries out the reaction RNA(n) + a ribonucleoside 5'-triphosphate = RNA(n+1) + diphosphate. With respect to regulation, inhibited by the antiviral drug hexamethylene amiloride. Inhibition by amantadine appears to be genotype-dependent. Also inhibited by long-alkyl-chain iminosugar derivatives. Activity is up-regulated by PRK2/PKN2-mediated phosphorylation. Packages viral RNA to form a viral nucleocapsid, and promotes virion budding. Participates in the viral particle production as a result of its interaction with the non-structural protein 5A. Binds RNA and may function as a RNA chaperone to induce the RNA structural rearrangements taking place during virus replication. Modulates viral translation initiation by interacting with viral IRES and 40S ribosomal subunit. Affects various cell signaling pathways, host immunity and lipid metabolism. Prevents the establishment of cellular antiviral state by blocking the interferon-alpha/beta (IFN-alpha/beta) and IFN-gamma signaling pathways and by blocking the formation of phosphorylated STAT1 and promoting ubiquitin-mediated proteasome-dependent degradation of STAT1. Activates STAT3 leading to cellular transformation. Regulates the activity of cellular genes, including c-myc and c-fos. May repress the promoter of p53, and sequester CREB3 and SP110 isoform 3/Sp110b in the cytoplasm. Represses cell cycle negative regulating factor CDKN1A, thereby interrupting an important check point of normal cell cycle regulation. Targets transcription factors involved in the regulation of inflammatory responses and in the immune response: suppresses TNF-induced NF-kappa-B activation, and activates AP-1. Binds to dendritic cells (DCs) via C1QR1, resulting in down-regulation of T-lymphocytes proliferation. Alters lipid metabolism by interacting with hepatocellular proteins involved in lipid accumulation and storage. Induces up-regulation of FAS promoter activity, and thereby contributes to the increased triglyceride accumulation in hepatocytes (steatosis). In terms of biological role, forms a heterodimer with envelope glycoprotein E2, which mediates virus attachment to the host cell, virion internalization through clathrin-dependent endocytosis and fusion with host membrane. Fusion with the host cell is most likely mediated by both E1 and E2, through conformational rearrangements of the heterodimer required for fusion rather than a classical class II fusion mechanism. E1/E2 heterodimer binds host apolipoproteins such as APOB and APOE thereby forming a lipo-viro-particle (LVP). APOE associated to the LVP allows the initial virus attachment to cell surface receptors such as the heparan sulfate proteoglycans (HSPGs), syndecan-1 (SDC1), syndecan-1 (SDC2), the low-density lipoprotein receptor (LDLR) and scavenger receptor class B type I (SCARB1). The cholesterol transfer activity of SCARB1 allows E2 exposure and binding of E2 to SCARB1 and the tetraspanin CD81. E1/E2 heterodimer binding on CD81 activates the epithelial growth factor receptor (EGFR) signaling pathway. Diffusion of the complex E1-E2-EGFR-SCARB1-CD81 to the cell lateral membrane allows further interaction with Claudin 1 (CLDN1) and occludin (OCLN) to finally trigger HCV entry. Its function is as follows. Forms a heterodimer with envelope glycoprotein E1, which mediates virus attachment to the host cell, virion internalization through clathrin-dependent endocytosis and fusion with host membrane. Fusion with the host cell is most likely mediated by both E1 and E2, through conformational rearrangements of the heterodimer required for fusion rather than a classical class II fusion mechanism. The interaction between envelope glycoprotein E2 and host apolipoprotein E/APOE allows the proper assembly, maturation and infectivity of the viral particles. This interaction is probably promoted via the up-regulation of cellular autophagy by the virus. E1/E2 heterodimer binds host apolipoproteins such as APOB and APOE thereby forming a lipo-viro-particle (LVP). APOE associated to the LVP allows the initial virus attachment to cell surface receptors such as the heparan sulfate proteoglycans (HSPGs), syndecan-1 (SDC1), syndecan-1 (SDC2), the low-density lipoprotein receptor (LDLR) and scavenger receptor class B type I (SCARB1). The cholesterol transfer activity of SCARB1 allows E2 exposure and binding of E2 to SCARB1 and the tetraspanin CD81. E1/E2 heterodimer binding on CD81 activates the epithelial growth factor receptor (EGFR) signaling pathway. Diffusion of the complex E1-E2-EGFR-SCARB1-CD81 to the cell lateral membrane allows further interaction with Claudin 1 (CLDN1) and occludin (OCLN) to finally trigger HCV entry. Inhibits host EIF2AK2/PKR activation, preventing the establishment of an antiviral state. Viral ligand for CD209/DC-SIGN and CLEC4M/DC-SIGNR, which are respectively found on dendritic cells (DCs), and on liver sinusoidal endothelial cells and macrophage-like cells of lymph node sinuses. These interactions allow the capture of circulating HCV particles by these cells and subsequent facilitated transmission to permissive cells such as hepatocytes and lymphocyte subpopulations. The interaction between E2 and host amino acid transporter complex formed by SLC3A2 and SLC7A5/LAT1 may facilitate viral entry into host cell. Functionally, ion channel protein that acts as a viroporin and plays an essential role in the assembly, envelopment and secretion of viral particles. Regulates the host cell secretory pathway, which induces the intracellular retention of viral glycoproteins and favors assembly of viral particles. Creates a pore in acidic organelles and releases Ca(2+) and H(+) in the cytoplasm of infected cells, leading to a productive viral infection. High levels of cytoplasmic Ca(2+) may trigger membrane trafficking and transport of viral ER-associated proteins to viroplasms, sites of viral genome replication. This ionic imbalance induces the assembly of the inflammasome complex, which triggers the maturation of pro-IL-1beta into IL-1beta through the action of caspase-1. Targets also host mitochondria and induces mitochondrial depolarization. In addition of its role as a viroporin, acts as a lipid raft adhesion factor. Cysteine protease required for the proteolytic auto-cleavage between the non-structural proteins NS2 and NS3. The N-terminus of NS3 is required for the function of NS2 protease (active region NS2-3). Promotes the initiation of viral particle assembly by mediating the interaction between structural and non-structural proteins. In terms of biological role, displays three enzymatic activities: serine protease with a chymotrypsin-like fold, NTPase and RNA helicase. NS3 serine protease, in association with NS4A, is responsible for the cleavages of NS3-NS4A, NS4A-NS4B, NS4B-NS5A and NS5A-NS5B. The NS3/NS4A complex prevents phosphorylation of host IRF3, thus preventing the establishment of dsRNA induced antiviral state. The NS3/NS4A complex induces host amino acid transporter component SLC3A2, thus contributing to HCV propagation. NS3 RNA helicase binds to RNA and unwinds both dsDNA and dsRNA in the 3' to 5' direction, and likely resolves RNA complicated stable secondary structures in the template strand. Binds a single ATP and catalyzes the unzipping of a single base pair of dsRNA. Inhibits host antiviral proteins TBK1 and IRF3 thereby preventing the establishment of an antiviral state. Cleaves host MAVS/CARDIF thereby preventing the establishment of an antiviral state. Cleaves host TICAM1/TRIF, thereby disrupting TLR3 signaling and preventing the establishment of an antiviral state. Its function is as follows. Induces a specific membrane alteration that serves as a scaffold for the virus replication complex. This membrane alteration gives rise to the so-called ER-derived membranous web that contains the replication complex. NS4B self-interaction contributes to its function in membranous web formation. Promotes host TRIF protein degradation in a CASP8-dependent manner thereby inhibiting host TLR3-mediated interferon signaling. Disrupts the interaction between STING and TBK1 contributing to the inhibition of interferon signaling. Functionally, phosphorylated protein that is indispensable for viral replication and assembly. Both hypo- and hyperphosphorylated states are required for the viral life cycle. The hyperphosphorylated form of NS5A is an inhibitor of viral replication. Involved in RNA-binding and especially in binding to the viral genome. Zinc is essential for RNA-binding. Participates in the viral particle production as a result of its interaction with the mature viral core protein. Its interaction with host VAPB may target the viral replication complex to vesicles. Down-regulates viral IRES translation initiation. Mediates interferon resistance, presumably by interacting with and inhibiting host EIF2AK2/PKR. Prevents BIN1-induced apoptosis. Acts as a transcriptional activator of some host genes important for viral replication when localized in the nucleus. Via the interaction with host PACSIN2, modulates lipid droplet formation in order to promote virion assembly. Modulates TNFRSF21/DR6 signaling pathway for viral propagation. RNA-dependent RNA polymerase that performs primer-template recognition and RNA synthesis during viral replication. Initiates RNA transcription/replication at a flavin adenine dinucleotide (FAD), resulting in a 5'- FAD cap on viral RNAs. In this way, recognition of viral 5' RNA by host pattern recognition receptors can be bypassed, thereby evading activation of antiviral pathways. The polypeptide is Genome polyprotein (Homo sapiens (Human)).